A 231-amino-acid polypeptide reads, in one-letter code: Biosynthetic peptidoglycan transglycosylase (231 aa).

Residues 12-32 (LLAAFALLLLWQVWLFAQVAW) traverse the membrane as a helical segment.

The protein belongs to the glycosyltransferase 51 family.

The protein localises to the cell inner membrane. The enzyme catalyses [GlcNAc-(1-&gt;4)-Mur2Ac(oyl-L-Ala-gamma-D-Glu-L-Lys-D-Ala-D-Ala)](n)-di-trans,octa-cis-undecaprenyl diphosphate + beta-D-GlcNAc-(1-&gt;4)-Mur2Ac(oyl-L-Ala-gamma-D-Glu-L-Lys-D-Ala-D-Ala)-di-trans,octa-cis-undecaprenyl diphosphate = [GlcNAc-(1-&gt;4)-Mur2Ac(oyl-L-Ala-gamma-D-Glu-L-Lys-D-Ala-D-Ala)](n+1)-di-trans,octa-cis-undecaprenyl diphosphate + di-trans,octa-cis-undecaprenyl diphosphate + H(+). It participates in cell wall biogenesis; peptidoglycan biosynthesis. Its function is as follows. Peptidoglycan polymerase that catalyzes glycan chain elongation from lipid-linked precursors. This Azoarcus sp. (strain BH72) protein is Biosynthetic peptidoglycan transglycosylase.